The sequence spans 312 residues: tRNA uridine(34) hydroxylase (312 aa).

The Rhodanese domain maps to 123-217 (SDPEVLLIDT…YLEEVPQEQS (95 aa)). The Cysteine persulfide intermediate role is filled by C177. Positions 282 to 293 (ARERQKQIELAR) are enriched in basic and acidic residues. The disordered stretch occupies residues 282–312 (ARERQKQIELARQRNQPHPLGRDPRQSTLEN).

The protein belongs to the TrhO family.

The enzyme catalyses uridine(34) in tRNA + AH2 + O2 = 5-hydroxyuridine(34) in tRNA + A + H2O. Catalyzes oxygen-dependent 5-hydroxyuridine (ho5U) modification at position 34 in tRNAs. The protein is tRNA uridine(34) hydroxylase of Pseudomonas paraeruginosa (strain DSM 24068 / PA7) (Pseudomonas aeruginosa (strain PA7)).